The primary structure comprises 305 residues: UDP-3-O-acyl-N-acetylglucosamine deacetylase (305 aa).

The Zn(2+) site is built by H79, H238, and D242. H265 acts as the Proton donor in catalysis.

It belongs to the LpxC family. It depends on Zn(2+) as a cofactor.

The catalysed reaction is a UDP-3-O-[(3R)-3-hydroxyacyl]-N-acetyl-alpha-D-glucosamine + H2O = a UDP-3-O-[(3R)-3-hydroxyacyl]-alpha-D-glucosamine + acetate. It participates in glycolipid biosynthesis; lipid IV(A) biosynthesis; lipid IV(A) from (3R)-3-hydroxytetradecanoyl-[acyl-carrier-protein] and UDP-N-acetyl-alpha-D-glucosamine: step 2/6. Its function is as follows. Catalyzes the hydrolysis of UDP-3-O-myristoyl-N-acetylglucosamine to form UDP-3-O-myristoylglucosamine and acetate, the committed step in lipid A biosynthesis. This Actinobacillus succinogenes (strain ATCC 55618 / DSM 22257 / CCUG 43843 / 130Z) protein is UDP-3-O-acyl-N-acetylglucosamine deacetylase.